The primary structure comprises 210 residues: Large ribosomal subunit protein bL17 (210 aa).

A disordered region spans residues 177 to 210 (TRSAQRPAFEQDAPESDSAPEAEAKTEEETASAN).

This sequence belongs to the bacterial ribosomal protein bL17 family. Part of the 50S ribosomal subunit. Contacts protein L32.

The sequence is that of Large ribosomal subunit protein bL17 from Rhodopirellula baltica (strain DSM 10527 / NCIMB 13988 / SH1).